The sequence spans 201 residues: FMN-dependent NADH:quinone oxidoreductase (201 aa).

92–95 (MWNL) lines the FMN pocket.

Belongs to the azoreductase type 1 family. In terms of assembly, homodimer. The cofactor is FMN.

The catalysed reaction is 2 a quinone + NADH + H(+) = 2 a 1,4-benzosemiquinone + NAD(+). It catalyses the reaction N,N-dimethyl-1,4-phenylenediamine + anthranilate + 2 NAD(+) = 2-(4-dimethylaminophenyl)diazenylbenzoate + 2 NADH + 2 H(+). In terms of biological role, quinone reductase that provides resistance to thiol-specific stress caused by electrophilic quinones. Also exhibits azoreductase activity. Catalyzes the reductive cleavage of the azo bond in aromatic azo compounds to the corresponding amines. This is FMN-dependent NADH:quinone oxidoreductase from Caldicellulosiruptor bescii (strain ATCC BAA-1888 / DSM 6725 / KCTC 15123 / Z-1320) (Anaerocellum thermophilum).